The sequence spans 382 residues: MSAWVLPDHIADVLPSEARHIEELRRGLLDTARCYGYELVMPPLMEHLESLLTGTGEALDLQTFKLVDQLSGRSLGLRADTTPQVARIDAHLLNRKGVTRLCYCGPVLHTRPDRPHATREPLQFGAEIYGHSGLEADLEALQLARECLRVAGVRDTTIDLADMRIVRKLLAGVALSPQRLSRIHAALAAKDAGELAALTHCFAADSRAALLALLQLYGDEAVLAEAEKALQRIDGISPVLANLRWLASRLEGAQVTFDLADLRGYAYYSGARFAIYARGASDALVRGGRYDEVGAVFGRNRPAVGLSLDIKQVVGVVPPQTLKAAIRAPWGEAADVNAAIAELRAAGETVVCVLPGHESEVDEFHCDRELAQVSGRWVVQAV.

This sequence belongs to the class-II aminoacyl-tRNA synthetase family. HisZ subfamily. Heteromultimer composed of HisG and HisZ subunits.

It localises to the cytoplasm. The protein operates within amino-acid biosynthesis; L-histidine biosynthesis; L-histidine from 5-phospho-alpha-D-ribose 1-diphosphate: step 1/9. In terms of biological role, required for the first step of histidine biosynthesis. May allow the feedback regulation of ATP phosphoribosyltransferase activity by histidine. The sequence is that of ATP phosphoribosyltransferase regulatory subunit from Verminephrobacter eiseniae (strain EF01-2).